Consider the following 550-residue polypeptide: Cytokinin dehydrogenase 10 (550 aa).

The N-terminal stretch at 1–26 is a signal peptide; that stretch reads MMPRAQLTTFLIVTSFLSTVPYLRAP. Residues 64-245 form the FAD-binding PCMH-type domain; it reads VHATPNGVFR…TRARIRLEPA (182 aa). Residues Gly100, Lys101, and Gly102 each contribute to the FAD site. His103 carries the post-translational modification Pros-8alpha-FAD histidine. FAD contacts are provided by Ser104, Gln108, Asp169, Thr174, Ser180, Ile184, and Ile235. N-linked (GlcNAc...) asparagine glycosylation occurs at Asn289. FAD is bound by residues Tyr489, Ser524, and Gln527. The interval 523 to 550 is disordered; that stretch reads LSPGQGIFPPPPPPSPPPPAAGEPITAS. Positions 530–543 are enriched in pro residues; sequence FPPPPPPSPPPPAA.

It belongs to the oxygen-dependent FAD-linked oxidoreductase family. Monomer. Requires FAD as cofactor.

Its subcellular location is the secreted. It localises to the extracellular space. The catalysed reaction is N(6)-dimethylallyladenine + A + H2O = 3-methyl-2-butenal + adenine + AH2. Its function is as follows. Catalyzes the oxidation of cytokinins, a family of N(6)-substituted adenine derivatives that are plant hormones, where the substituent is an isopentenyl group. The sequence is that of Cytokinin dehydrogenase 10 (CKX10) from Oryza sativa subsp. japonica (Rice).